We begin with the raw amino-acid sequence, 177 residues long: Ubiquinol-cytochrome c reductase iron-sulfur subunit (177 aa).

The helical transmembrane segment at 18-38 (IVLTASSVAAVGAACAFWPII) threads the bilayer. Residues 88–175 (ARAVKMSELI…YIFISDKKIR (88 aa)) enclose the Rieske domain. Positions 120, 122, 139, and 142 each coordinate [2Fe-2S] cluster. A disulfide bridge connects residues cysteine 125 and cysteine 141.

This sequence belongs to the Rieske iron-sulfur protein family. As to quaternary structure, the main subunits of complex b-c1 are: cytochrome b, cytochrome c1 and the Rieske protein. The cofactor is [2Fe-2S] cluster.

It is found in the cell membrane. It carries out the reaction a quinol + 2 Fe(III)-[cytochrome c](out) = a quinone + 2 Fe(II)-[cytochrome c](out) + 2 H(+)(out). Component of the ubiquinol-cytochrome c reductase complex (complex III or cytochrome b-c1 complex), which is a respiratory chain that generates an electrochemical potential coupled to ATP synthesis. This is Ubiquinol-cytochrome c reductase iron-sulfur subunit (petA) from Rickettsia prowazekii (strain Madrid E).